The primary structure comprises 479 residues: GTPase Der (479 aa).

2 EngA-type G domains span residues 3 to 167 (FKVA…GEAR) and 208 to 383 (MRIA…KVWN). GTP-binding positions include 9-16 (GRPNVGKS), 56-60 (DTAGF), 119-122 (NKAE), 214-221 (GRPNAGKS), 261-265 (DTAGM), and 326-329 (NKWD). Residues 384-468 (SRVSTGKLNR…PIRIALRTSD (85 aa)) form the KH-like domain.

Belongs to the TRAFAC class TrmE-Era-EngA-EngB-Septin-like GTPase superfamily. EngA (Der) GTPase family. In terms of assembly, associates with the 50S ribosomal subunit.

Its function is as follows. GTPase that plays an essential role in the late steps of ribosome biogenesis. The polypeptide is GTPase Der (Mesorhizobium japonicum (strain LMG 29417 / CECT 9101 / MAFF 303099) (Mesorhizobium loti (strain MAFF 303099))).